The following is a 729-amino-acid chain: MLYKGDTLYLDWLEDGIAELVFDAPGSVNKLDTATVASLGEAIGVLEQQSDLKGLLLRSNKAAFIVGADITEFLSLFLVPEEQLSQWLHFANSVFNRLEDLPVPTIAAVNGYALGGGCECVLATDYRLATPDLRIGLPETKLGIMPGFGGSVRMPRMLGADSALEIIAAGKDVGADQALKIGLVDGVVKAEKLVEGAKAVLRQAINGDLDWKAKRQPKLEPLKLSKIEATMSFTIAKGMVAQTAGKHYPAPITAVKTIEAAARFGREEALNLENKSFVPLAHTNEARALVGIFLNDQYVKGKAKKLTKDVETPKQAAVLGAGIMGGGIAYQSAWKGVPVVMKDINDKSLTLGMTEAAKLLNKQLERGKIDGLKLAGVISTIHPTLDYAGFDRVDIVVEAVVENPKVKKAVLAETEQKVRQDTVLASNTSTIPISELANALERPENFCGMHFFNPVHRMPLVEIIRGEKSSDETIAKVVAWASKMGKTPIVVNDCPGFFVNRVLFPYFAGFSQLLRDGADFRKIDKVMEKQFGWPMGPAYLLDVVGIDTAHHAQAVMAAGFPQRMQKDYRDAIDALFDANRFGQKNGLGFWRYKEDSKGKPKKEEDAAVEDLLAEVSQPKRDFSEEEIIARMMIPMVNEVVRCLEEGIIATPAEADMALVYGLGFPPFHGGAFRWLDTLGSAKYLDMAQQYQHLGPLYEVPEGLRNKARHNEPYYPPVEPARPVGDLKTA.

Positions 1–189 (MLYKGDTLYL…KIGLVDGVVK (189 aa)) are enoyl-CoA hydratase/isomerase. Residue aspartate 296 participates in substrate binding. Residues 311–729 (ETPKQAAVLG…ARPVGDLKTA (419 aa)) form a 3-hydroxyacyl-CoA dehydrogenase region. NAD(+)-binding positions include methionine 324, aspartate 343, 400-402 (VVE), lysine 407, and serine 429. The For 3-hydroxyacyl-CoA dehydrogenase activity role is filled by histidine 450. Asparagine 453 contacts NAD(+). Substrate is bound by residues asparagine 500 and tyrosine 660. A disordered region spans residues 708-729 (RHNEPYYPPVEPARPVGDLKTA).

The protein in the N-terminal section; belongs to the enoyl-CoA hydratase/isomerase family. It in the C-terminal section; belongs to the 3-hydroxyacyl-CoA dehydrogenase family. As to quaternary structure, heterotetramer of two alpha chains (FadB) and two beta chains (FadA).

The enzyme catalyses a (3S)-3-hydroxyacyl-CoA + NAD(+) = a 3-oxoacyl-CoA + NADH + H(+). It carries out the reaction a (3S)-3-hydroxyacyl-CoA = a (2E)-enoyl-CoA + H2O. The catalysed reaction is a 4-saturated-(3S)-3-hydroxyacyl-CoA = a (3E)-enoyl-CoA + H2O. It catalyses the reaction (3S)-3-hydroxybutanoyl-CoA = (3R)-3-hydroxybutanoyl-CoA. The enzyme catalyses a (3Z)-enoyl-CoA = a 4-saturated (2E)-enoyl-CoA. It carries out the reaction a (3E)-enoyl-CoA = a 4-saturated (2E)-enoyl-CoA. The protein operates within lipid metabolism; fatty acid beta-oxidation. Its function is as follows. Involved in the aerobic and anaerobic degradation of long-chain fatty acids via beta-oxidation cycle. Catalyzes the formation of 3-oxoacyl-CoA from enoyl-CoA via L-3-hydroxyacyl-CoA. It can also use D-3-hydroxyacyl-CoA and cis-3-enoyl-CoA as substrate. This is Fatty acid oxidation complex subunit alpha from Escherichia coli (strain K12 / MC4100 / BW2952).